A 108-amino-acid polypeptide reads, in one-letter code: Large ribosomal subunit protein bL31B (108 aa).

The segment at 81–108 is disordered; the sequence is KPAQPVQAPAEEGPVVKGKKKAPAKKKK. Over residues 97–108 the composition is skewed to basic residues; sequence KGKKKAPAKKKK.

It belongs to the bacterial ribosomal protein bL31 family. Type B subfamily. Part of the 50S ribosomal subunit.

In Chlamydia caviae (strain ATCC VR-813 / DSM 19441 / 03DC25 / GPIC) (Chlamydophila caviae), this protein is Large ribosomal subunit protein bL31B.